A 402-amino-acid chain; its full sequence is LIM/homeobox protein Lhx5 (402 aa).

LIM zinc-binding domains are found at residues 3–61 and 62–125; these read AHCA…RRFG and TKCA…ASSL. 3 disordered regions span residues 133-187, 291-335, and 365-392; these read VSSC…RTTI, NYDF…GHHP, and SGEV…LPHQ. The span at 151–167 shows a compositional bias: basic and acidic residues; it reads DESKETDHSTSSDKETA. A DNA-binding region (homeobox) is located at residues 180–239; the sequence is RRGPRTTIKAKQLETLKAAFIATPKPTRHIREQLAQETGLNMRVIQVWFQNRRSKERRMK. The span at 300 to 319 shows a compositional bias: polar residues; that stretch reads PSSQTQSPADSSYLQNSGPG.

Interacts with ldb1 and with the N-terminus of rnf12.

Its subcellular location is the nucleus. Functionally, probably involved in the patterning of the nervous system, in particular in the early specification of the diencephalon. The chain is LIM/homeobox protein Lhx5 (lhx5) from Xenopus laevis (African clawed frog).